We begin with the raw amino-acid sequence, 634 residues long: AAl-toxin cluster-specific transcription factor ALT13 (634 aa).

The segment at residues 30 to 56 (CENCKRRKVRCSGANPCEQCLKVNVHC) is a DNA-binding region (zn(2)-C6 fungal-type). Residues 66–89 (RRSVPNSGADKNNQQGDTDRHNGA) are disordered. The segment covering 69 to 81 (VPNSGADKNNQQG) has biased composition (polar residues).

It localises to the nucleus. Its function is as follows. Transcription factor that regulates the expression of the gene cluster that mediates the biosynthesis of AAL-toxins, sphinganine-analog mycotoxins responsible for Alternaria stem canker on tomato by the tomato pathotype. In Alternaria alternata (Alternaria rot fungus), this protein is AAl-toxin cluster-specific transcription factor ALT13.